The following is a 595-amino-acid chain: Outer dynein arm-docking complex subunit 3 (595 aa).

The segment at 1-69 is disordered; the sequence is MTSPLCRAAS…RGAGKPSVHS (69 aa). Coiled-coil stretches lie at residues 94 to 327 and 385 to 473; these read WNIK…REHL and FAQL…ASKL.

In terms of assembly, component of the outer dynein arm-docking complex along with ODAD1, ODAD2, ODAD4 and CLXN. Interacts with ODAD1. Interacts with PIERCE1 and PIERCE2; the interactions link the outer dynein arms docking complex (ODA-DC) to the internal microtubule inner proteins (MIP) in cilium axoneme.

It localises to the cytoplasm. The protein localises to the cytoskeleton. Its subcellular location is the cilium basal body. The protein resides in the microtubule organizing center. It is found in the centrosome. It localises to the centriole. The protein localises to the cilium axoneme. Component of the outer dynein arm-docking complex (ODA-DC) that mediates outer dynein arms (ODA) binding onto the doublet microtubule. Involved in mediating assembly of both ODAs and their axonemal docking complex onto ciliary microtubules. The protein is Outer dynein arm-docking complex subunit 3 of Homo sapiens (Human).